We begin with the raw amino-acid sequence, 356 residues long: Peptide-N(4)-(N-acetyl-beta-glucosaminyl)asparagine amidase (356 aa).

Zn(2+)-binding residues include C129, C132, C163, and C166. Catalysis depends on C189, which acts as the Nucleophile. Catalysis depends on residues H216 and D233. E236 is a binding site for substrate. Positions 300-356 (IRQNLSPSEKEELKREDEAEERELASYNADEPQEAQMPRQSGSVEWTKARGEGGSDD) are disordered. 2 stretches are compositionally biased toward basic and acidic residues: residues 307-316 (SEKEELKRED) and 346-356 (TKARGEGGSDD).

It belongs to the transglutaminase-like superfamily. PNGase family. Zn(2+) serves as cofactor.

It is found in the cytoplasm. The catalysed reaction is Hydrolysis of an N(4)-(acetyl-beta-D-glucosaminyl)asparagine residue in which the glucosamine residue may be further glycosylated, to yield a (substituted) N-acetyl-beta-D-glucosaminylamine and a peptide containing an aspartate residue.. Specifically deglycosylates the denatured form of N-linked glycoproteins in the cytoplasm and assists their proteasome-mediated degradation. Cleaves the beta-aspartyl-glucosamine (GlcNAc) of the glycan and the amide side chain of Asn, converting Asn to Asp. Prefers proteins containing high-mannose over those bearing complex type oligosaccharides. Can recognize misfolded proteins in the endoplasmic reticulum that are exported to the cytosol to be destroyed and deglycosylate them, while it has no activity toward native proteins. Deglycosylation is a prerequisite for subsequent proteasome-mediated degradation of some, but not all, misfolded glycoproteins. The chain is Peptide-N(4)-(N-acetyl-beta-glucosaminyl)asparagine amidase (PNG1) from Yarrowia lipolytica (strain CLIB 122 / E 150) (Yeast).